A 433-amino-acid chain; its full sequence is DNA polymerase processivity factor (433 aa).

Positions 274–433 (RGDPFDKNYV…VPNTKKQKCG (160 aa)) are disordered. Composition is skewed to gly residues over residues 289-298 (SRGGGGGGGS), 325-336 (GLGGLGGGGGGG), and 344-359 (GGGG…GGGG). Residues 360–376 (GDHDHGLSSKEKYEQHK) are compositionally biased toward basic and acidic residues. Residues 385–398 (GGSGGGGGGGGGGL) show a composition bias toward gly residues. Residue K410 forms a Glycyl lysine isopeptide (Lys-Gly) (interchain with G-Cter in host SUMO1) linkage. 3 positions are modified to phosphoserine: S413, S415, and S418.

This sequence belongs to the herpesviridae polymerase accessory protein family. Forms homodimers. Interacts with host SMARCB1. Interacts with host NCL/nucleolin; this interaction is important for the organization of proteins within viral replication compartments. Interacts with UL112/UL113; this interaction is necessary for efficient viral DNA replication. Interacts with UL84. Interacts with the uracil DNA glycosylase UL114. Interacts with the DNA polymerase catalytic subunit UL54. Interacts with host IRF3. Interacts with host RELA. In terms of processing, phosphorylated by UL97 on serine residues, phosphorylation seems important for UL44 nuclear entry but does not directly affect its role in replication. Post-translationally, sumoylated. Sumoylation on Lys-410 increases viral DNA replication.

It localises to the virion. It is found in the host nucleus. In terms of biological role, accessory subunit of the DNA polymerase that plays an essential role in viral DNA replication and acts by increasing the processivity of polymerization. Forms dimers that binds to double-stranded DNA and UL54 specifically to stimulates long chain DNA synthesis efficiently. Plays an important role in maintaining the structure of viral replication compartments by interacting with host nucleolin/NUC. In addition, suppresses innate immune responses through effects on host IRF3 and NF-kappa-B. Mechanistically, interfere with the binding of IRF3 and the p65 NF-kappa-B subunit to the promoters of antiviral genes, thereby inhibiting the expression of these genes. The chain is DNA polymerase processivity factor (UL44) from Homo sapiens (Human).